Here is a 373-residue protein sequence, read N- to C-terminus: Queuine tRNA-ribosyltransferase (373 aa).

Aspartate 90 (proton acceptor) is an active-site residue. Substrate-binding positions include 90–94, aspartate 144, glutamine 193, and glycine 220; that span reads DSGGF. Residues 251-257 form an RNA binding region; the sequence is GVGTPED. Aspartate 270 serves as the catalytic Nucleophile. The tract at residues 275–279 is RNA binding; important for wobble base 34 recognition; sequence TRNAR. The Zn(2+) site is built by cysteine 308, cysteine 310, cysteine 313, and histidine 339.

This sequence belongs to the queuine tRNA-ribosyltransferase family. As to quaternary structure, homodimer. Within each dimer, one monomer is responsible for RNA recognition and catalysis, while the other monomer binds to the replacement base PreQ1. Zn(2+) is required as a cofactor.

The catalysed reaction is 7-aminomethyl-7-carbaguanine + guanosine(34) in tRNA = 7-aminomethyl-7-carbaguanosine(34) in tRNA + guanine. It functions in the pathway tRNA modification; tRNA-queuosine biosynthesis. In terms of biological role, catalyzes the base-exchange of a guanine (G) residue with the queuine precursor 7-aminomethyl-7-deazaguanine (PreQ1) at position 34 (anticodon wobble position) in tRNAs with GU(N) anticodons (tRNA-Asp, -Asn, -His and -Tyr). Catalysis occurs through a double-displacement mechanism. The nucleophile active site attacks the C1' of nucleotide 34 to detach the guanine base from the RNA, forming a covalent enzyme-RNA intermediate. The proton acceptor active site deprotonates the incoming PreQ1, allowing a nucleophilic attack on the C1' of the ribose to form the product. After dissociation, two additional enzymatic reactions on the tRNA convert PreQ1 to queuine (Q), resulting in the hypermodified nucleoside queuosine (7-(((4,5-cis-dihydroxy-2-cyclopenten-1-yl)amino)methyl)-7-deazaguanosine). This is Queuine tRNA-ribosyltransferase from Campylobacter jejuni subsp. jejuni serotype O:23/36 (strain 81-176).